Consider the following 221-residue polypeptide: Probable glutathione S-transferase (221 aa).

One can recognise a GST N-terminal domain in the interval 4–83; the sequence is EEVILLDFWP…YIEEVWKDKA (80 aa). Residues Ser-14, Lys-41, Ile-55, and 67-68 each bind glutathione; that span reads ES. A GST C-terminal domain is found at 90 to 214; the sequence is DPYDRAQARF…PKVLEFVKVL (125 aa).

Belongs to the GST superfamily. HSP26 family. Root tip-specific expression.

It carries out the reaction RX + glutathione = an S-substituted glutathione + a halide anion + H(+). The chain is Probable glutathione S-transferase from Nicotiana tabacum (Common tobacco).